The following is a 478-amino-acid chain: Ribosomal RNA small subunit methyltransferase F (478 aa).

Residues 123–129, glutamate 147, aspartate 174, and aspartate 192 each bind S-adenosyl-L-methionine; that span reads AAAPGSK. Cysteine 245 acts as the Nucleophile in catalysis.

The protein belongs to the class I-like SAM-binding methyltransferase superfamily. RsmB/NOP family.

Its subcellular location is the cytoplasm. It carries out the reaction cytidine(1407) in 16S rRNA + S-adenosyl-L-methionine = 5-methylcytidine(1407) in 16S rRNA + S-adenosyl-L-homocysteine + H(+). In terms of biological role, specifically methylates the cytosine at position 1407 (m5C1407) of 16S rRNA. The sequence is that of Ribosomal RNA small subunit methyltransferase F from Vibrio campbellii (strain ATCC BAA-1116).